The following is a 957-amino-acid chain: Valine--tRNA ligase (957 aa).

The 'HIGH' region signature appears at 47-57 (PNITGQLHLGH). Residues 558 to 562 (KMSKS) carry the 'KMSKS' region motif. An ATP-binding site is contributed by lysine 561. The stretch at 889–918 (FNKENEINRLKKESELINRKIETIQKLLDD) forms a coiled coil.

Belongs to the class-I aminoacyl-tRNA synthetase family. ValS type 1 subfamily. In terms of assembly, monomer.

The protein resides in the cytoplasm. The catalysed reaction is tRNA(Val) + L-valine + ATP = L-valyl-tRNA(Val) + AMP + diphosphate. Catalyzes the attachment of valine to tRNA(Val). As ValRS can inadvertently accommodate and process structurally similar amino acids such as threonine, to avoid such errors, it has a 'posttransfer' editing activity that hydrolyzes mischarged Thr-tRNA(Val) in a tRNA-dependent manner. The chain is Valine--tRNA ligase from Blochmanniella pennsylvanica (strain BPEN).